A 94-amino-acid chain; its full sequence is Small ribosomal subunit protein bS6 (94 aa).

This sequence belongs to the bacterial ribosomal protein bS6 family.

Functionally, binds together with bS18 to 16S ribosomal RNA. The sequence is that of Small ribosomal subunit protein bS6 from Clostridium botulinum (strain Hall / ATCC 3502 / NCTC 13319 / Type A).